Here is a 405-residue protein sequence, read N- to C-terminus: Acetate kinase (405 aa).

Residue Asn-7 coordinates Mg(2+). Lys-14 is a binding site for ATP. Arg-91 lines the substrate pocket. Catalysis depends on Asp-148, which acts as the Proton donor/acceptor. ATP contacts are provided by residues 208–212 and 283–285; these read HLGNG and DFR. Residue Glu-384 participates in Mg(2+) binding.

This sequence belongs to the acetokinase family. As to quaternary structure, homodimer. The cofactor is Mg(2+). Mn(2+) is required as a cofactor.

Its subcellular location is the cytoplasm. It catalyses the reaction acetate + ATP = acetyl phosphate + ADP. The protein operates within metabolic intermediate biosynthesis; acetyl-CoA biosynthesis; acetyl-CoA from acetate: step 1/2. In terms of biological role, catalyzes the formation of acetyl phosphate from acetate and ATP. Can also catalyze the reverse reaction. The protein is Acetate kinase of Dictyoglomus turgidum (strain DSM 6724 / Z-1310).